A 374-amino-acid chain; its full sequence is F-box/kelch-repeat protein At2g24250 (374 aa).

The F-box domain maps to 14–63; the sequence is PDWSQLPEELLHIISTHLEDHYFDAVHARSVCRSWRSTFPFPSSLLRQSY. Kelch repeat units lie at residues 100–150 and 249–301; these read SEYF…PLGH and NFLV…LGNF.

In Arabidopsis thaliana (Mouse-ear cress), this protein is F-box/kelch-repeat protein At2g24250.